The sequence spans 466 residues: Lipase 2 (466 aa).

The signal sequence occupies residues 1–16 (MKGLVFLLGLLPTIYA). A disulfide bond links Cys-112 and Cys-285. Residue Ser-196 is the Charge relay system of the active site. N-linked (GlcNAc...) asparagine glycans are attached at residues Asn-231, Asn-319, and Asn-331. Residues Asp-348 and His-381 each act as charge relay system in the active site. A disulfide bond links Cys-364 and Cys-409. Asn-422 and Asn-451 each carry an N-linked (GlcNAc...) asparagine glycan.

It belongs to the AB hydrolase superfamily. Lipase family. Class Lip subfamily.

The protein localises to the secreted. It carries out the reaction a triacylglycerol + H2O = a diacylglycerol + a fatty acid + H(+). In terms of biological role, secreted lipase that is able to hydrolyze both the neutral triacylglycerols and the monopalmitate ester Tween 40, allowing the use of hydrolyzed products as carbon sources. Has broad lipolytic activity, which may be important for colonization and subsequent infection, therefore contributing to the persistence and virulence in human tissue. My be important for alimentary tract colonization, but not oral infection. Facilitates invasive disease via lipid-based suppression of the IL-17 response. Inhibits IL-17 production indirectly by suppressing IL-23 production by tissue-resident dendritic cells. The chain is Lipase 2 from Candida albicans (strain SC5314 / ATCC MYA-2876) (Yeast).